Here is a 66-residue protein sequence, read N- to C-terminus: Alpha-like toxin Bom3 (66 aa).

Positions 2–66 (RDGYIAQPEN…PIVVGGEKCH (65 aa)) constitute an LCN-type CS-alpha/beta domain. Disulfide bonds link cysteine 12-cysteine 65, cysteine 16-cysteine 37, cysteine 23-cysteine 47, and cysteine 27-cysteine 49.

It belongs to the long (4 C-C) scorpion toxin superfamily. Sodium channel inhibitor family. Alpha subfamily. In terms of tissue distribution, expressed by the venom gland.

The protein resides in the secreted. Its function is as follows. Alpha toxins bind voltage-independently at site-3 of sodium channels (Nav) and inhibit the inactivation of the activated channels, thereby blocking neuronal transmission. As it competes neither with the classical alpha-toxin AaH2 nor the beta-toxin Css2, this toxin is an alpha-like toxin. The polypeptide is Alpha-like toxin Bom3 (Buthus occitanus mardochei (Moroccan scorpion)).